Here is a 743-residue protein sequence, read N- to C-terminus: Coiled-coil domain-containing protein 30 (743 aa).

Composition is skewed to basic and acidic residues over residues 1–22 (MSQE…REKQ) and 133–193 (SPKE…MKPE). Disordered regions lie at residues 1–25 (MSQE…QLAS), 114–193 (ENIC…MKPE), 208–233 (SLLQ…GDKL), and 695–715 (SKEA…LVCS). Coiled coils occupy residues 21 to 98 (KQLA…QLNH) and 165 to 580 (REGQ…LIHS). Residues 208–223 (SLLQSQSSGDSSDDSG) are compositionally biased toward low complexity.

The protein belongs to the prefoldin subunit beta family.

The sequence is that of Coiled-coil domain-containing protein 30 (CCDC30) from Macaca fascicularis (Crab-eating macaque).